A 76-amino-acid chain; its full sequence is UPF0235 protein MMAR_2910 (76 aa).

Belongs to the UPF0235 family.

This is UPF0235 protein MMAR_2910 from Mycobacterium marinum (strain ATCC BAA-535 / M).